We begin with the raw amino-acid sequence, 131 residues long: Holo-[acyl-carrier-protein] synthase (131 aa).

Positions 6 and 55 each coordinate Mg(2+).

Belongs to the P-Pant transferase superfamily. AcpS family. Requires Mg(2+) as cofactor.

The protein resides in the cytoplasm. It catalyses the reaction apo-[ACP] + CoA = holo-[ACP] + adenosine 3',5'-bisphosphate + H(+). Functionally, transfers the 4'-phosphopantetheine moiety from coenzyme A to a Ser of acyl-carrier-protein. This is Holo-[acyl-carrier-protein] synthase from Verminephrobacter eiseniae (strain EF01-2).